We begin with the raw amino-acid sequence, 111 residues long: MAVKIRLARGGAKKRPFYRVVVANATAPRDGDFLEKVGTYNPMLAKDSNERVVLKADRVEYWLKSGAKPTDRVARFIEQAGIALPEKVKKEMEVKLKNRKAKPSKKEAKEA.

The protein belongs to the bacterial ribosomal protein bS16 family.

The chain is Small ribosomal subunit protein bS16 from Rickettsia bellii (strain OSU 85-389).